The following is a 47-amino-acid chain: Large ribosomal subunit protein eL40 (47 aa).

It belongs to the eukaryotic ribosomal protein eL40 family.

The chain is Large ribosomal subunit protein eL40 from Methanocaldococcus jannaschii (strain ATCC 43067 / DSM 2661 / JAL-1 / JCM 10045 / NBRC 100440) (Methanococcus jannaschii).